A 916-amino-acid polypeptide reads, in one-letter code: Internalin J (916 aa).

An N-terminal signal peptide occupies residues 1 to 25; that stretch reads MKTSKIIIASLVSLTLVSNPILTFA. LRR repeat units lie at residues 94–115, 116–136, 137–157, 158–179, 180–200, 201–221, 222–243, 244–263, 264–284, 285–306, 316–325, 338–357, 359–368, and 380–402; these read TLTS…EKLT, GLTK…SQNT, NLTY…TPLT, KLTY…QNPL, LTYL…HNTQ, LTEL…TPQT, QLTT…QNKL, LNRL…NQNI, QLTF…TPLT, QLTY…TLSK, DLLEIDLTHN, KIKE…DCQA, GITELDLSQN, and ELTK…NAHI. 5 MucBP domains span residues 506 to 568, 576 to 638, 646 to 708, 717 to 779, and 787 to 849; these read PIKG…SQSV, IVAA…SQTV, IVAA…AQTV, and APEK…SQTV. Residues 862–888 form a disordered region; the sequence is PLPDKKTTKPSNLKTTEVKKASDTLPK. Positions 886–890 match the LPXTG sorting signal motif; it reads LPKTG. Threonine 889 is subject to Pentaglycyl murein peptidoglycan amidated threonine. Residues 890 to 916 constitute a propeptide, removed by sortase; the sequence is GDSTPWKSALLGVFLSSTALVIWKKKK.

Belongs to the internalin family.

It localises to the secreted. The protein resides in the cell wall. Involved in several steps of L.monocytogenes infection, probably improves adhesin to host cells. In Listeria monocytogenes serotype 4b (strain F2365), this protein is Internalin J (inlJ).